A 314-amino-acid polypeptide reads, in one-letter code: 4-hydroxy-3-methylbut-2-enyl diphosphate reductase (314 aa).

Residue Cys-12 coordinates [4Fe-4S] cluster. (2E)-4-hydroxy-3-methylbut-2-enyl diphosphate-binding residues include His-43 and His-81. Dimethylallyl diphosphate contacts are provided by His-43 and His-81. His-43 and His-81 together coordinate isopentenyl diphosphate. [4Fe-4S] cluster is bound at residue Cys-103. A (2E)-4-hydroxy-3-methylbut-2-enyl diphosphate-binding site is contributed by His-131. His-131 serves as a coordination point for dimethylallyl diphosphate. An isopentenyl diphosphate-binding site is contributed by His-131. The active-site Proton donor is Glu-133. Thr-170 is a (2E)-4-hydroxy-3-methylbut-2-enyl diphosphate binding site. Cys-198 is a [4Fe-4S] cluster binding site. Ser-226, Asn-228, and Ser-271 together coordinate (2E)-4-hydroxy-3-methylbut-2-enyl diphosphate. Dimethylallyl diphosphate is bound by residues Ser-226, Asn-228, and Ser-271. Isopentenyl diphosphate is bound by residues Ser-226, Asn-228, and Ser-271.

Belongs to the IspH family. [4Fe-4S] cluster is required as a cofactor.

The catalysed reaction is isopentenyl diphosphate + 2 oxidized [2Fe-2S]-[ferredoxin] + H2O = (2E)-4-hydroxy-3-methylbut-2-enyl diphosphate + 2 reduced [2Fe-2S]-[ferredoxin] + 2 H(+). The enzyme catalyses dimethylallyl diphosphate + 2 oxidized [2Fe-2S]-[ferredoxin] + H2O = (2E)-4-hydroxy-3-methylbut-2-enyl diphosphate + 2 reduced [2Fe-2S]-[ferredoxin] + 2 H(+). The protein operates within isoprenoid biosynthesis; dimethylallyl diphosphate biosynthesis; dimethylallyl diphosphate from (2E)-4-hydroxy-3-methylbutenyl diphosphate: step 1/1. It participates in isoprenoid biosynthesis; isopentenyl diphosphate biosynthesis via DXP pathway; isopentenyl diphosphate from 1-deoxy-D-xylulose 5-phosphate: step 6/6. Its function is as follows. Catalyzes the conversion of 1-hydroxy-2-methyl-2-(E)-butenyl 4-diphosphate (HMBPP) into a mixture of isopentenyl diphosphate (IPP) and dimethylallyl diphosphate (DMAPP). Acts in the terminal step of the DOXP/MEP pathway for isoprenoid precursor biosynthesis. This chain is 4-hydroxy-3-methylbut-2-enyl diphosphate reductase, found in Shouchella clausii (strain KSM-K16) (Alkalihalobacillus clausii).